The following is a 146-amino-acid chain: Ribosome maturation factor RimP (146 aa).

This sequence belongs to the RimP family.

It localises to the cytoplasm. In terms of biological role, required for maturation of 30S ribosomal subunits. The sequence is that of Ribosome maturation factor RimP from Helicobacter pylori (strain Shi470).